The primary structure comprises 435 residues: MKYFKNIIFWNKLHPDEQKKILSRPILKENNFIKKTVKEIIENVRLFGNSALKKYTFLFDKQDINTFQVSKEKISSSSFYLSKVLKDSISVAQKNITCFHKAQIPSKIDVETEVGVRCEQIYLPLNSIGIYIPGGTAPLFSTVLMLAIPAKISGCKKIILCSPPPISNEVLYAAHICGIHDIYQVGGAQAIAALALGTETVPKVDKIFGPGNAYVTEAKLQVSSIFNGTEIDMLAGPSELLIIADNTANPDFIAADLLSQAEHGVSSQVILLTPCFELAEKVVLSINKQLNNLSRLSEILKTLKNSSVIIVKNLSECIEISNMYAPEHLIIQTQSPREVLNYISNASSIFLGLWSPESAGDYASGTNHVLPTYGKSITNSSLGLCDFQKRVLVQELTAKGLMKLSNTIEILSSAEKLQAHKNAVKIRVDFLKGKI.

NAD(+) contacts are provided by Tyr-131, Gln-189, and Asn-212. Ser-238, Gln-260, and His-263 together coordinate substrate. 2 residues coordinate Zn(2+): Gln-260 and His-263. Active-site proton acceptor residues include Glu-327 and His-328. Residues His-328, Asp-361, Glu-415, and His-420 each contribute to the substrate site. Asp-361 provides a ligand contact to Zn(2+). His-420 is a Zn(2+) binding site.

The protein belongs to the histidinol dehydrogenase family. Homodimer. Zn(2+) serves as cofactor.

The catalysed reaction is L-histidinol + 2 NAD(+) + H2O = L-histidine + 2 NADH + 3 H(+). The protein operates within amino-acid biosynthesis; L-histidine biosynthesis; L-histidine from 5-phospho-alpha-D-ribose 1-diphosphate: step 9/9. Functionally, catalyzes the sequential NAD-dependent oxidations of L-histidinol to L-histidinaldehyde and then to L-histidine. The protein is Histidinol dehydrogenase (hisD) of Buchnera aphidicola subsp. Acyrthosiphon pisum (strain APS) (Acyrthosiphon pisum symbiotic bacterium).